Reading from the N-terminus, the 154-residue chain is 6,7-dimethyl-8-ribityllumazine synthase (154 aa).

Residues Phe22, 56-58 (AFE), and 80-82 (AVI) each bind 5-amino-6-(D-ribitylamino)uracil. 85 to 86 (ET) is a binding site for (2S)-2-hydroxy-3-oxobutyl phosphate. His88 acts as the Proton donor in catalysis. Position 113 (Phe113) interacts with 5-amino-6-(D-ribitylamino)uracil. A (2S)-2-hydroxy-3-oxobutyl phosphate-binding site is contributed by Arg127.

This sequence belongs to the DMRL synthase family.

The catalysed reaction is (2S)-2-hydroxy-3-oxobutyl phosphate + 5-amino-6-(D-ribitylamino)uracil = 6,7-dimethyl-8-(1-D-ribityl)lumazine + phosphate + 2 H2O + H(+). Its pathway is cofactor biosynthesis; riboflavin biosynthesis; riboflavin from 2-hydroxy-3-oxobutyl phosphate and 5-amino-6-(D-ribitylamino)uracil: step 1/2. In terms of biological role, catalyzes the formation of 6,7-dimethyl-8-ribityllumazine by condensation of 5-amino-6-(D-ribitylamino)uracil with 3,4-dihydroxy-2-butanone 4-phosphate. This is the penultimate step in the biosynthesis of riboflavin. The polypeptide is 6,7-dimethyl-8-ribityllumazine synthase (Thermoanaerobacter sp. (strain X514)).